The primary structure comprises 318 residues: Methionyl-tRNA formyltransferase (318 aa).

112–115 (SILP) is a (6S)-5,6,7,8-tetrahydrofolate binding site.

This sequence belongs to the Fmt family.

It catalyses the reaction L-methionyl-tRNA(fMet) + (6R)-10-formyltetrahydrofolate = N-formyl-L-methionyl-tRNA(fMet) + (6S)-5,6,7,8-tetrahydrofolate + H(+). Functionally, attaches a formyl group to the free amino group of methionyl-tRNA(fMet). The formyl group appears to play a dual role in the initiator identity of N-formylmethionyl-tRNA by promoting its recognition by IF2 and preventing the misappropriation of this tRNA by the elongation apparatus. The sequence is that of Methionyl-tRNA formyltransferase from Shewanella sp. (strain MR-7).